The following is a 194-amino-acid chain: Peptidyl-tRNA hydrolase (194 aa).

Histidine 22 (proton acceptor) is an active-site residue. TRNA-binding residues include tyrosine 67, asparagine 69, and asparagine 115.

The protein belongs to the PTH family. In terms of assembly, monomer.

The protein resides in the cytoplasm. The catalysed reaction is an N-acyl-L-alpha-aminoacyl-tRNA + H2O = an N-acyl-L-amino acid + a tRNA + H(+). Functionally, hydrolyzes ribosome-free peptidyl-tRNAs (with 1 or more amino acids incorporated), which drop off the ribosome during protein synthesis, or as a result of ribosome stalling. Its function is as follows. Catalyzes the release of premature peptidyl moieties from peptidyl-tRNA molecules trapped in stalled 50S ribosomal subunits, and thus maintains levels of free tRNAs and 50S ribosomes. The protein is Peptidyl-tRNA hydrolase of Granulibacter bethesdensis (strain ATCC BAA-1260 / CGDNIH1).